Reading from the N-terminus, the 133-residue chain is Large ribosomal subunit protein uL15 (133 aa).

A disordered region spans residues 1–64 (MGLENLKPAK…QPLQRRLPKI (64 aa)).

The protein belongs to the universal ribosomal protein uL15 family. Part of the 50S ribosomal subunit.

In terms of biological role, binds to the 23S rRNA. The polypeptide is Large ribosomal subunit protein uL15 (Helicobacter pylori (strain Shi470)).